The primary structure comprises 555 residues: Hdr-like menaquinol oxidoreductase iron-sulfur subunit 2 (555 aa).

2 consecutive 4Fe-4S ferredoxin-type domains span residues 82–111 (RSFK…GDPK) and 151–180 (KELY…AEIV). The [4Fe-4S] cluster site is built by cysteine 91, cysteine 94, cysteine 97, cysteine 101, cysteine 160, cysteine 163, cysteine 166, and cysteine 170.

Consists of five subunits: an integral membrane subunit, a cytochrome b-like subunit, a cytochrome c subunit and two iron-sulfur subunits. [4Fe-4S] cluster is required as a cofactor.

It is found in the cell membrane. Has menaquinol-oxidizing activity. HmeC and HmeD subunits may together mediate electron transfer from menaquinol to an unidentified electron acceptor on the cytoplasmic side of the membrane. This chain is Hdr-like menaquinol oxidoreductase iron-sulfur subunit 2 (hmeD), found in Archaeoglobus fulgidus (strain ATCC 49558 / DSM 4304 / JCM 9628 / NBRC 100126 / VC-16).